Reading from the N-terminus, the 573-residue chain is Myrcene synthase TPS5FN (573 aa).

5 residues coordinate (2E)-geranyl diphosphate: Arg-286, Asp-323, Asp-327, Arg-464, and Asp-467. Mg(2+) is bound by residues Asp-323 and Asp-327. The short motif at 323–327 (DDIFD) is the DDXXD motif element. Asp-467, Thr-471, and Glu-475 together coordinate Mg(2+).

The protein belongs to the terpene synthase family. Tpsb subfamily. The cofactor is Mg(2+). It depends on Mn(2+) as a cofactor. In terms of tissue distribution, expressed in glandular trichomes two to four weeks after flowering onset.

It catalyses the reaction (2E)-geranyl diphosphate = beta-myrcene + diphosphate. The catalysed reaction is (2E)-geranyl diphosphate = (1R,5R)-alpha-pinene + diphosphate. The enzyme catalyses (2E)-geranyl diphosphate = sabinene + diphosphate. It carries out the reaction (2E)-geranyl diphosphate = (4S)-limonene + diphosphate. It catalyses the reaction (2E)-geranyl diphosphate = terpinolene + diphosphate. The catalysed reaction is (2E)-geranyl diphosphate = camphene + diphosphate. Its pathway is secondary metabolite biosynthesis; terpenoid biosynthesis. Its function is as follows. Involved in monoterpene (C10) olefins biosynthesis, constituants of cannabinoids and terpenoids-rich resins. Catalyzes mainly the conversion of (2E)-geranyl diphosphate to beta-myrcene, and also produces minor products such as alpha-pinene, camphene, sabinene, limonene and terpinolene. The protein is Myrcene synthase TPS5FN of Cannabis sativa (Hemp).